We begin with the raw amino-acid sequence, 504 residues long: Cytochrome P450 4A25 (504 aa).

Transmembrane regions (helical) follow at residues 6 to 26 (LASA…LLLL) and 110 to 130 (APVL…LLNG). Heme is bound at residue C451.

The protein belongs to the cytochrome P450 family. Heme is required as a cofactor.

The protein resides in the endoplasmic reticulum membrane. The enzyme catalyses an omega-methyl-long-chain fatty acid + reduced [NADPH--hemoprotein reductase] + O2 = an omega-hydroxy-long-chain fatty acid + oxidized [NADPH--hemoprotein reductase] + H2O + H(+). Catalyzes the omega- and (omega-1)-hydroxylation of various fatty acids such as laurate and palmitate. Has no activity toward taurochenodeoxycholic acid. The polypeptide is Cytochrome P450 4A25 (CYP4A25) (Sus scrofa (Pig)).